The chain runs to 427 residues: Adenylosuccinate synthetase (427 aa).

Residues 12-18 (GDEGKGK) and 40-42 (GHT) each bind GTP. Asp-13 serves as the catalytic Proton acceptor. Mg(2+) contacts are provided by Asp-13 and Gly-40. Residues 13–16 (DEGK), 38–41 (NAGH), Thr-128, Arg-142, Gln-223, Thr-238, and Arg-302 each bind IMP. The active-site Proton donor is His-41. 298 to 304 (TTTGRPR) contacts substrate. Residues Arg-304, 330-332 (SID), and 412-414 (SVG) each bind GTP.

This sequence belongs to the adenylosuccinate synthetase family. As to quaternary structure, homodimer. It depends on Mg(2+) as a cofactor.

The protein resides in the cytoplasm. The enzyme catalyses IMP + L-aspartate + GTP = N(6)-(1,2-dicarboxyethyl)-AMP + GDP + phosphate + 2 H(+). It functions in the pathway purine metabolism; AMP biosynthesis via de novo pathway; AMP from IMP: step 1/2. In terms of biological role, plays an important role in the de novo pathway of purine nucleotide biosynthesis. Catalyzes the first committed step in the biosynthesis of AMP from IMP. The chain is Adenylosuccinate synthetase from Staphylococcus aureus (strain MW2).